A 440-amino-acid chain; its full sequence is Tetratricopeptide repeat protein 5 (440 aa).

5 TPR repeats span residues 7–61, 68–98, 103–130, 136–174, and 179–216; these read EEAK…EEVL, AQAL…AVKL, VEAW…SGAL, KVSL…AVQM, and GRSW…AEKV. The Nuclear export signal signature appears at 13 to 24; sequence LQKLQGLVDRLY. Phosphoserine; by ATM is present on Ser203. Position 221 is a phosphoserine; by CHEK2 (Ser221). The TPR 6 repeat unit spans residues 224–253; the sequence is PDLHLNRATLHKYEESYGEALEGFSQAAAL. Residues 285 to 287 form a mediates interaction with 28S rRNA of ribosome-coding tubulin region; it reads KPK.

Interacts with JMY and p300/EP300; the interaction occurs in the nucleus and augments the association between JMY and p300/EP300 in response to DNA damage. Interacts with PRMT5; the interaction is DNA damage-dependent and promotes PRMT5 interaction with p53/TP53 and subsequent methylation. Forms a complex with HSF1 and p300/EP300; these interactions augment chromatin-bound HSF1 and p300/EP300 histone acetyltransferase activity, resulting in enhanced heat-shock-responsive transcription. Interacts with JMY; the interaction occurs in the cytoplasm and results in the inhibition of JYM's nucleation activity. Interacts with ribosome-coding tubulin (via 60S subunit 28S rRNA and protein uL24/RPL26) and the N-terminal of nascent tubulin polypeptide (via alpha-tubulin MREC motif and beta-tubulin MREI motif); these interactions result in tubulin mRNA-targeted degradation. Interacts with ATP5F1B; the interaction occurs in the mitochondria and results in ATP production decrease. Interacts with p53/TP53; the interaction occurs in the mitochondria and results in increased apoptosis. Phosphorylation by ATM kinase induces nuclear accumulation while interfering with nuclear export, and phosphorylation by CHEK2 kinase enhances nuclear stability. Expressed in heart, brain, spleen, lung, liver, skeletal muscle, kidney and testis.

The protein localises to the nucleus. Its subcellular location is the cytoplasm. It is found in the cytoplasmic vesicle. It localises to the mitochondrion matrix. Functionally, cofactor involved in the regulation of various cellular mechanisms such as actin regulation, autophagy, chromatin regulation and DNA repair. In physiological conditions, interacts with cofactor JMY in the cytoplasm which prevents JMY's actin nucleation activity and ability to activate the Arp2/3 complex. Acts as a negative regulator of nutrient stress-induced autophagy by inhibiting JMY's interaction with MAP1LC3B, thereby preventing autophagosome formation. Involves in tubulin autoregulation by promoting its degradation in response to excess soluble tubulin. To do so, associates with the active ribosome near the ribosome exit tunnel and with nascent tubulin polypeptides early during their translation, triggering tubulin mRNA-targeted degradation. Following DNA damage, phosphorylated by DNA damage responsive protein kinases ATM and CHEK2, leading to its nuclear accumulation and stability. Nuclear TTC5/STRAP promotes the assembly of a stress-responsive p53/TP53 coactivator complex, which includes the coactivators JMY and p300, thereby increasing p53/TP53-dependent transcription and apoptosis. Also recruits arginine methyltransferase PRMT5 to p53/TP53 when DNA is damaged, allowing PRMT5 to methylate p53/TP53. In DNA stress conditions, also prevents p53/TP53 degradation by E3 ubiquitin ligase MDM2. Upon heat-shock stress, forms a chromatin-associated complex with heat-shock factor 1 HSF1 and p300/EP300 to stimulate heat-shock-responsive transcription, thereby increasing cell survival. Mitochondrial TTC5/STRAP interacts with ATP synthase subunit beta ATP5F1B which decreased ATP synthase activity and lowers mitochondrial ATP production, thereby regulating cellular respiration and mitochondrial-dependent apoptosis. Mitochondrial TTC5/STRAP also regulates p53/TP53-mediated apoptosis. This Mus musculus (Mouse) protein is Tetratricopeptide repeat protein 5.